We begin with the raw amino-acid sequence, 1268 residues long: Vigilin (1268 aa).

Ser-2 bears the N-acetylserine mark. Thr-8 is subject to Phosphothreonine. Residues Ser-11, Ser-31, and Ser-35 each carry the phosphoserine modification. KH domains lie at 158–229 (PKEH…RLEV), 230–302 (EKAF…AVEV), 303–371 (KKSQ…SVAA), 372–442 (PSWL…EINI), 443–514 (DHKF…DLII), 515–588 (EQRF…SVPI), 589–660 (FKQF…EVSI), 661–734 (PAKL…DIRA), 735–807 (KPEY…SMLV), 808–880 (DPKH…ECAI), 881–979 (PQKF…EVEV), 980–1059 (PFDL…SVTV), 1060–1134 (DPKY…DVPL), and 1135–1209 (DHRV…ALQV). Residues Thr-295 and Thr-296 each carry the phosphothreonine modification. Ser-317 carries the phosphoserine modification. Phosphotyrosine is present on Tyr-437. At Ser-645 the chain carries Phosphoserine. Residues 914-944 (ENAVHSTEPVVQENGDEAGEGREAKDCDPGS) form a disordered region. Residues 932–944 (GEGREAKDCDPGS) are compositionally biased toward basic and acidic residues. Position 991 is an N6-acetyllysine (Lys-991). Residues 1233 to 1268 (WTASSSEKAPDMSSSEEFPSFGAQVAPKTLPWGPKR) are disordered. The span at 1234-1249 (TASSSEKAPDMSSSEE) shows a compositional bias: polar residues. Ser-1247 and Ser-1252 each carry phosphoserine.

Its subcellular location is the cytoplasm. It is found in the nucleus. Functionally, appears to play a role in cell sterol metabolism. It may function to protect cells from over-accumulation of cholesterol. This Homo sapiens (Human) protein is Vigilin (HDLBP).